The primary structure comprises 398 residues: tRNA-specific 2-thiouridylase MnmA (398 aa).

Residues 18-25 and Leu-44 each bind ATP; that span reads AMSGGVDS. Catalysis depends on Cys-112, which acts as the Nucleophile. The cysteines at positions 112 and 213 are disulfide-linked. Gly-136 contacts ATP. Residues 163-165 form an interaction with tRNA region; it reads RDQ. Residue Cys-213 is the Cysteine persulfide intermediate of the active site.

The protein belongs to the MnmA/TRMU family.

The protein resides in the cytoplasm. The enzyme catalyses S-sulfanyl-L-cysteinyl-[protein] + uridine(34) in tRNA + AH2 + ATP = 2-thiouridine(34) in tRNA + L-cysteinyl-[protein] + A + AMP + diphosphate + H(+). In terms of biological role, catalyzes the 2-thiolation of uridine at the wobble position (U34) of tRNA, leading to the formation of s(2)U34. The polypeptide is tRNA-specific 2-thiouridylase MnmA (Sinorhizobium medicae (strain WSM419) (Ensifer medicae)).